We begin with the raw amino-acid sequence, 63 residues long: Large ribosomal subunit protein uL29 (63 aa).

Belongs to the universal ribosomal protein uL29 family.

The sequence is that of Large ribosomal subunit protein uL29 from Herminiimonas arsenicoxydans.